The sequence spans 404 residues: Glucose-1-phosphate adenylyltransferase (404 aa).

Alpha-D-glucose 1-phosphate is bound by residues Tyr99, Gly164, 179 to 180, and Ser197; that span reads EK.

This sequence belongs to the bacterial/plant glucose-1-phosphate adenylyltransferase family.

The enzyme catalyses alpha-D-glucose 1-phosphate + ATP + H(+) = ADP-alpha-D-glucose + diphosphate. It functions in the pathway capsule biogenesis; capsule polysaccharide biosynthesis. The protein operates within glycan biosynthesis; glycogen biosynthesis. Its function is as follows. Involved in the biosynthesis of ADP-glucose, a building block, required in the biosynthesis of maltose-1-phosphate (M1P) and in the elongation reactions to produce linear alpha-1,4-glucans. Catalyzes the reaction between ATP and alpha-D-glucose 1-phosphate (G1P) to produce pyrophosphate and ADP-Glc. The polypeptide is Glucose-1-phosphate adenylyltransferase (Mycobacterium leprae (strain Br4923)).